The chain runs to 176 residues: ATP synthase subunit b (176 aa).

A helical transmembrane segment spans residues 18–38; it reads GVEWGTVIVTVITFAILLALL.

This sequence belongs to the ATPase B chain family. As to quaternary structure, F-type ATPases have 2 components, F(1) - the catalytic core - and F(0) - the membrane proton channel. F(1) has five subunits: alpha(3), beta(3), gamma(1), delta(1), epsilon(1). F(0) has three main subunits: a(1), b(2) and c(10-14). The alpha and beta chains form an alternating ring which encloses part of the gamma chain. F(1) is attached to F(0) by a central stalk formed by the gamma and epsilon chains, while a peripheral stalk is formed by the delta and b chains.

It localises to the cell membrane. Functionally, f(1)F(0) ATP synthase produces ATP from ADP in the presence of a proton or sodium gradient. F-type ATPases consist of two structural domains, F(1) containing the extramembraneous catalytic core and F(0) containing the membrane proton channel, linked together by a central stalk and a peripheral stalk. During catalysis, ATP synthesis in the catalytic domain of F(1) is coupled via a rotary mechanism of the central stalk subunits to proton translocation. In terms of biological role, component of the F(0) channel, it forms part of the peripheral stalk, linking F(1) to F(0). The polypeptide is ATP synthase subunit b (Staphylococcus haemolyticus (strain JCSC1435)).